The primary structure comprises 141 residues: ATP synthase epsilon chain (141 aa).

This sequence belongs to the ATPase epsilon chain family. As to quaternary structure, F-type ATPases have 2 components, CF(1) - the catalytic core - and CF(0) - the membrane proton channel. CF(1) has five subunits: alpha(3), beta(3), gamma(1), delta(1), epsilon(1). CF(0) has three main subunits: a, b and c.

It is found in the cell inner membrane. Produces ATP from ADP in the presence of a proton gradient across the membrane. This chain is ATP synthase epsilon chain, found in Teredinibacter turnerae (strain ATCC 39867 / T7901).